The following is a 293-amino-acid chain: ATP phosphoribosyltransferase (293 aa).

The protein belongs to the ATP phosphoribosyltransferase family. Long subfamily. Mg(2+) serves as cofactor.

It is found in the cytoplasm. The catalysed reaction is 1-(5-phospho-beta-D-ribosyl)-ATP + diphosphate = 5-phospho-alpha-D-ribose 1-diphosphate + ATP. Its pathway is amino-acid biosynthesis; L-histidine biosynthesis; L-histidine from 5-phospho-alpha-D-ribose 1-diphosphate: step 1/9. With respect to regulation, feedback inhibited by histidine. Functionally, catalyzes the condensation of ATP and 5-phosphoribose 1-diphosphate to form N'-(5'-phosphoribosyl)-ATP (PR-ATP). Has a crucial role in the pathway because the rate of histidine biosynthesis seems to be controlled primarily by regulation of HisG enzymatic activity. The polypeptide is ATP phosphoribosyltransferase (Nitratidesulfovibrio vulgaris (strain DP4) (Desulfovibrio vulgaris)).